Reading from the N-terminus, the 425-residue chain is D-arabinitol transporter (425 aa).

At 1–7 (MSINNKQ) the chain is on the cytoplasmic side. The chain crosses the membrane as a helical span at residues 8 to 28 (WLGLPLNLLWGYIAIAVFMTG). Over 29 to 51 (DGFELAFLSHYIKALGFSPAEAS) the chain is Extracellular. The helical transmembrane segment at 52–72 (FAFTLYGLAAALSAWISGVVA) threads the bilayer. Over 73 to 80 (EIITPLKT) the chain is Cytoplasmic. The chain crosses the membrane as a helical span at residues 81–101 (MMIGFVLWCVFHVLFLVFGLG). At 102–107 (HANYAL) the chain is on the extracellular side. The helical transmembrane segment at 108–128 (ILLFYGIRGFAYPLFLYSFIV) threads the bilayer. Residues 129-141 (AIVHNVKSDNASS) lie on the Cytoplasmic side of the membrane. Residues 142–162 (AIGWFWAVYSIGIGVFGSYIP) traverse the membrane as a helical segment. At 163 to 172 (SFTIPHIGEM) the chain is on the extracellular side. The helical transmembrane segment at 173–193 (GTLWLALAFCLTGGVIALVSL) threads the bilayer. Topologically, residues 194–237 (RHIQTPQHMQNLTTREKFSELGRAATLLYTNRNILLSSMVRIIN) are cytoplasmic. A helical transmembrane segment spans residues 238-258 (TLSLFGFAVIMPMMFVDELGF). Residues 259–263 (STSEW) are Extracellular-facing. Residues 264 to 284 (LQVWAVFFFTTIFSNVLWGIL) form a helical membrane-spanning segment. Residues 285 to 295 (GEKLGWMKVVR) are Cytoplasmic-facing. The chain crosses the membrane as a helical span at residues 296–316 (WFGCIGMALSSLAFYYIPQHF). Topologically, residues 317–323 (GHSFAMA) are extracellular. Residues 324–344 (LIPAIALGIFVAAFVPLAAVF) form a helical membrane-spanning segment. At 345–360 (PALEPKHKGAAISVYN) the chain is on the cytoplasmic side. A helical transmembrane segment spans residues 361–381 (LSAGMSNFLAPAIAVVLLPFF). At 382-383 (ST) the chain is on the extracellular side. Residues 384–404 (IGVVIAYTALYVVAFFLCAFI) form a helical membrane-spanning segment. The Cytoplasmic portion of the chain corresponds to 405–425 (RVEQPGFSHKEATAREQVEFS).

It belongs to the major facilitator superfamily. Sugar transporter (TC 2.A.1.1) family. CsbX subfamily.

It localises to the cell membrane. The polypeptide is D-arabinitol transporter (dalT) (Klebsiella pneumoniae).